A 173-amino-acid polypeptide reads, in one-letter code: Ribulose bisphosphate carboxylase small subunit, chloroplastic 1 (173 aa).

The transit peptide at 1-52 (MMVSTAAVARVRPAQTNMVGAFNGCRSSVAFPATRKANNDLSTLPSSGGRVS) directs the protein to the chloroplast.

The protein belongs to the RuBisCO small chain family. Heterohexadecamer of 8 large and 8 small subunits.

It is found in the plastid. It localises to the chloroplast. RuBisCO catalyzes two reactions: the carboxylation of D-ribulose 1,5-bisphosphate, the primary event in carbon dioxide fixation, as well as the oxidative fragmentation of the pentose substrate. Both reactions occur simultaneously and in competition at the same active site. Although the small subunit is not catalytic it is essential for maximal activity. The polypeptide is Ribulose bisphosphate carboxylase small subunit, chloroplastic 1 (Lemna gibba (Swollen duckweed)).